A 240-amino-acid polypeptide reads, in one-letter code: Probable transcriptional regulatory protein BLi02909/BL01150 (240 aa).

A compositionally biased stretch (basic residues) spans Met-1–Lys-14. The interval Met-1–Arg-21 is disordered.

The protein belongs to the TACO1 family.

The protein localises to the cytoplasm. The polypeptide is Probable transcriptional regulatory protein BLi02909/BL01150 (Bacillus licheniformis (strain ATCC 14580 / DSM 13 / JCM 2505 / CCUG 7422 / NBRC 12200 / NCIMB 9375 / NCTC 10341 / NRRL NRS-1264 / Gibson 46)).